The following is a 339-amino-acid chain: MEAKLKQLEEKAKQDIQASTSTDSLEKVRVKYLGKKGELTEVLRGMGSLSKEERPLVGKIANLVREQIEEALELAKGAVKDKELESKLKMESLDVTMPGKTREIGKRHPLIQAMDELKSIFIGMGFKVAEGPEVETVHYNFDALNAAPNHPSRDMSDTFYINDHIILRTQTSPVQVRTMELQKPPIRIISPGRCFRNDTPDATHTPMFHQLEGLVVDKGITLGDLKGTLEVFIKQFFGNDTKVKFRPHHFPFTEPSAEVDVTCFKCAGHGCSMCKGEGWIELLGAGMVHPNVLRNCGIDPEIYSGFAFGMGIDRLTMAKYEIDDIRLLFENDMRFINQF.

Residues 1-14 (MEAKLKQLEEKAKQ) are compositionally biased toward basic and acidic residues. The tract at residues 1 to 20 (MEAKLKQLEEKAKQDIQAST) is disordered. Glu254 is a binding site for Mg(2+).

This sequence belongs to the class-II aminoacyl-tRNA synthetase family. Phe-tRNA synthetase alpha subunit type 1 subfamily. Tetramer of two alpha and two beta subunits. It depends on Mg(2+) as a cofactor.

Its subcellular location is the cytoplasm. It catalyses the reaction tRNA(Phe) + L-phenylalanine + ATP = L-phenylalanyl-tRNA(Phe) + AMP + diphosphate + H(+). In Alkaliphilus metalliredigens (strain QYMF), this protein is Phenylalanine--tRNA ligase alpha subunit.